The sequence spans 278 residues: Methyltransferase adrK (278 aa).

Residues 124 to 125 (DL), 151 to 152 (DV), and 152 to 153 (VL) each bind S-adenosyl-L-methionine.

Belongs to the class I-like SAM-binding methyltransferase superfamily. Homodimer.

Its pathway is secondary metabolite biosynthesis; terpenoid biosynthesis. In terms of biological role, methyltransferase; part of the gene cluster that mediates the biosynthesis of andrastins, meroterpenoid compounds that exhibit inhibitory activity against ras farnesyltransferase, suggesting that they could be promising leads for antitumor agents. The first step of the pathway is the synthesis of 3,5-dimethylorsellinic acid (DMOA) by the polyketide synthase adrD via condensation of one acetyl-CoA starter unit with 3 malonyl-CoA units and 2 methylations. DMAO is then converted to farnesyl-DMAO by the prenyltransferase adrG. The methyltransferase adrK catalyzes the methylation of the carboxyl group of farnesyl-DMAO to farnesyl-DMAO methyl ester which is further converted to epoxyfarnesyl-DMAO methyl ester by the FAD-dependent monooxygenase adrH. The terpene cyclase adrI then catalyzes the carbon skeletal rearrangement to generate the andrastin E, the first compound in the pathway having the andrastin scaffold, with the tetracyclic ring system. The post-cyclization tailoring enzymes adrF, adrE, adrJ, and adrA, are involved in the conversion of andrastin E into andrastin A. The short chain dehydrogenase adrF is responsible for the oxidation of the C-3 a hydroxyl group of andrastin E to yield the corresponding ketone, andrastin D. The ketoreductase adrE stereoselectively reduces the carbonyl moiety to reverse the stereochemistry of the C-3 position to yield andrastin F. The acetyltransferase adrJ is the acetyltransferase that attaches the acetyl group to the C-3 hydroxyl group of andrastin F to yield andrastin C. Finally, the cytochrome P450 monooxygenase adrA catalyzes two sequential oxidation reactions of the C-23 methyl group, to generate the corresponding alcohol andrastin B, and aldehyde andrastin A. In Penicillium roqueforti, this protein is Methyltransferase adrK.